We begin with the raw amino-acid sequence, 234 residues long: Sugar fermentation stimulation protein homolog (234 aa).

The protein belongs to the SfsA family.

The protein is Sugar fermentation stimulation protein homolog of Enterobacter sp. (strain 638).